Reading from the N-terminus, the 63-residue chain is Cytochrome b-c1 complex subunit 9 (63 aa).

At 2–21 the chain is on the mitochondrial matrix side; sequence AAATLTSKLYSLLFRRTSTF. Residues 22 to 47 form a helical membrane-spanning segment; the sequence is ALTIIVGVMFFERAFDQGADAIYDHI. Residues 48-63 lie on the Mitochondrial intermembrane side of the membrane; that stretch reads NEGKLWKHIKHKYENK.

The protein belongs to the UQCR10/QCR9 family. Component of the ubiquinol-cytochrome c oxidoreductase (cytochrome b-c1 complex, complex III, CIII), a multisubunit enzyme composed of 11 subunits. The complex is composed of 3 respiratory subunits cytochrome b, cytochrome c1 and Rieske protein UQCRFS1, 2 core protein subunits UQCRC1/QCR1 and UQCRC2/QCR2, and 6 low-molecular weight protein subunits UQCRH/QCR6, UQCRB/QCR7, UQCRQ/QCR8, UQCR10/QCR9, UQCR11/QCR10 and subunit 9, the cleavage product of Rieske protein UQCRFS1. The complex exists as an obligatory dimer and forms supercomplexes (SCs) in the inner mitochondrial membrane with NADH-ubiquinone oxidoreductase (complex I, CI) and cytochrome c oxidase (complex IV, CIV), resulting in different assemblies (supercomplex SCI(1)III(2)IV(1) and megacomplex MCI(2)III(2)IV(2)). Interacts with STMP1.

It is found in the mitochondrion inner membrane. In terms of biological role, component of the ubiquinol-cytochrome c oxidoreductase, a multisubunit transmembrane complex that is part of the mitochondrial electron transport chain which drives oxidative phosphorylation. The respiratory chain contains 3 multisubunit complexes succinate dehydrogenase (complex II, CII), ubiquinol-cytochrome c oxidoreductase (cytochrome b-c1 complex, complex III, CIII) and cytochrome c oxidase (complex IV, CIV), that cooperate to transfer electrons derived from NADH and succinate to molecular oxygen, creating an electrochemical gradient over the inner membrane that drives transmembrane transport and the ATP synthase. The cytochrome b-c1 complex catalyzes electron transfer from ubiquinol to cytochrome c, linking this redox reaction to translocation of protons across the mitochondrial inner membrane, with protons being carried across the membrane as hydrogens on the quinol. In the process called Q cycle, 2 protons are consumed from the matrix, 4 protons are released into the intermembrane space and 2 electrons are passed to cytochrome c. The polypeptide is Cytochrome b-c1 complex subunit 9 (UQCR10) (Homo sapiens (Human)).